The sequence spans 353 residues: Heterogeneous nuclear ribonucleoproteins A2/B1 (353 aa).

Methionine 1 is subject to N-acetylmethionine. The residue at position 4 (threonine 4) is a Phosphothreonine. The Nuclear localization signal signature appears at 9-15; the sequence is PLERKKR. RRM domains lie at 21 to 104 and 112 to 191; these read RKLF…ESGK and KKLF…LSRQ. Residue lysine 22 forms a Glycyl lysine isopeptide (Lys-Gly) (interchain with G-Cter in SUMO2) linkage. Residue serine 29 is modified to Phosphoserine. Arginine 38 bears the Omega-N-methylarginine mark. At serine 85 the chain carries Phosphoserine. Lysine 104 carries the post-translational modification N6,N6-dimethyllysine; alternate. A Glycyl lysine isopeptide (Lys-Gly) (interchain with G-Cter in SUMO2); alternate cross-link involves residue lysine 104. Glycyl lysine isopeptide (Lys-Gly) (interchain with G-Cter in SUMO2) cross-links involve residues lysine 112, lysine 120, and lysine 137. A Phosphothreonine modification is found at threonine 140. Residue serine 149 is modified to Phosphoserine. Lysine 152 is covalently cross-linked (Glycyl lysine isopeptide (Lys-Gly) (interchain with G-Cter in SUMO2)). Phosphothreonine is present on threonine 159. Glycyl lysine isopeptide (Lys-Gly) (interchain with G-Cter in SUMO2); alternate cross-links involve residues lysine 168 and lysine 173. N6-acetyllysine; alternate is present on residues lysine 168 and lysine 173. Threonine 176 bears the Phosphothreonine mark. Lysine 186 is covalently cross-linked (Glycyl lysine isopeptide (Lys-Gly) (interchain with G-Cter in SUMO2)). Phosphoserine is present on residues serine 189 and serine 201. The tract at residues 193 to 353 is disordered; sequence MQEVQSSRSG…SGGYGGRSRY (161 aa). Over residues 202-223 the composition is skewed to gly residues; it reads GRGGNFGFGDSRGGGGNFGPGP. Arginine 203 bears the Asymmetric dimethylarginine; alternate mark. A Dimethylated arginine; alternate modification is found at arginine 203. An Omega-N-methylarginine; alternate modification is found at arginine 203. Serine 212 is subject to Phosphoserine. Arginine 213 bears the Asymmetric dimethylarginine; alternate mark. Arginine 213 carries the dimethylated arginine; alternate modification. Arginine 213 bears the Omega-N-methylarginine; alternate mark. Serine 225 carries the phosphoserine modification. Arginine 228 is subject to Omega-N-methylarginine. Phosphoserine occurs at positions 231 and 236. Omega-N-methylarginine is present on arginine 238. Residue serine 259 is modified to Phosphoserine. Arginine 266 is subject to Asymmetric dimethylarginine; alternate. Arginine 266 is modified (omega-N-methylarginine; alternate). The tract at residues 308-347 is nuclear targeting sequence; the sequence is QQPSNYGPMKSGNFGGSRNMGGPYGGGNYGPGGSGGSGGY. A compositionally biased stretch (gly residues) spans 320-353; sequence NFGGSRNMGGPYGGGNYGPGGSGGSGGYGGRSRY. Serine 324 carries the phosphoserine modification. Arginine 325 carries the post-translational modification Omega-N-methylarginine. A Phosphotyrosine modification is found at tyrosine 331. 2 positions are modified to phosphoserine: serine 341 and serine 344. Position 347 is a phosphotyrosine (tyrosine 347). Arginine 350 bears the Omega-N-methylarginine mark.

In terms of assembly, homodimer; dimerization is required for nucleocytoplasmic translocation. Identified in the spliceosome C complex. Identified in a IGF2BP1-dependent mRNP granule complex containing untranslated mRNAs. Interacts with IGF2BP1. Interacts with C9orf72. Interacts with DGCR8. Interacts with TARDBP. Interacts with CKAP5. Interacts with TBK1. Interacts with STING1. Interacts with SRC. Interacts with PPIA/CYPA. Interacts (via C-terminus) with FAM76B; the interaction results in retention of HNRNPA2B1 in the nucleus and inhibition of the NF-kappa-B-mediated inflammatory pathway. Interacts with NF-kappa-B inhibitors NFKBIA and NFKBIE; the interaction may be mediated by the RRM2 domain of HNRNPA2B1, and HNRNPA2B1 may interact simultaneously with FAM76B and either NFKBIA or NFKBIE to form a complex. In terms of processing, asymmetric dimethylation at Arg-266 constitutes the major methylation site. According to a report, methylation affects subcellular location and promotes nuclear localization. According to another report, methylation at Arg-266 does not influence nucleocytoplasmic shuttling. Post-translationally, sumoylated in exosomes, promoting miRNAs-binding. As to expression, in the brain, isoform A2 and isoform B1 are abundant in large ganglion-type neurons, such as Purkinje cells, and are less abundant in neighboring glia cells. Isoform A2 is more abundant than isoform B1 in brain. In testis, isoform A2 and isoform B1 are present in spermatogonia and spermatocytes, but not in spermatids or sperm. Isoform A2 is more abundant in the adrenal medulla than in the cortical cells. Isoform B1 is found in both adrenal medulla and cortical cells. Isoform A2 is more abundant than isoform B1 in the adrenal gland. Isoform A2 and isoform B1 are both detected in pancreas and kidney, and at lower levels in heart and lung. Isoform B1 is more abundant than isoform A2 in heart, lung and intestine (at protein level). Isoform A2b and isoform B1b are testis-specific.

It localises to the nucleus. Its subcellular location is the cytoplasm. The protein localises to the nucleoplasm. The protein resides in the cytoplasmic granule. It is found in the secreted. It localises to the extracellular exosome. Functionally, heterogeneous nuclear ribonucleoprotein (hnRNP) that associates with nascent pre-mRNAs, packaging them into hnRNP particles. The hnRNP particle arrangement on nascent hnRNA is non-random and sequence-dependent and serves to condense and stabilize the transcripts and minimize tangling and knotting. Packaging plays a role in various processes such as transcription, pre-mRNA processing, RNA nuclear export, subcellular location, mRNA translation and stability of mature mRNAs. Forms hnRNP particles with at least 20 other different hnRNP and heterogeneous nuclear RNA in the nucleus. Involved in transport of specific mRNAs to the cytoplasm in oligodendrocytes and neurons: acts by specifically recognizing and binding the A2RE (21 nucleotide hnRNP A2 response element) or the A2RE11 (derivative 11 nucleotide oligonucleotide) sequence motifs present on some mRNAs, and promotes their transport to the cytoplasm. Specifically binds single-stranded telomeric DNA sequences, protecting telomeric DNA repeat against endonuclease digestion. Also binds other RNA molecules, such as primary miRNA (pri-miRNAs): acts as a nuclear 'reader' of the N6-methyladenosine (m6A) mark by specifically recognizing and binding a subset of nuclear m6A-containing pri-miRNAs. Binding to m6A-containing pri-miRNAs promotes pri-miRNA processing by enhancing binding of DGCR8 to pri-miRNA transcripts. Involved in miRNA sorting into exosomes following sumoylation, possibly by binding (m6A)-containing pre-miRNAs. Acts as a regulator of efficiency of mRNA splicing, possibly by binding to m6A-containing pre-mRNAs. Plays a role in the splicing of pyruvate kinase PKM by binding repressively to sequences flanking PKM exon 9, inhibiting exon 9 inclusion and resulting in exon 10 inclusion and production of the PKM M2 isoform. Also plays a role in the activation of the innate immune response. Mechanistically, senses the presence of viral DNA in the nucleus, homodimerizes and is demethylated by JMJD6. In turn, translocates to the cytoplasm where it activates the TBK1-IRF3 pathway, leading to interferon alpha/beta production. The sequence is that of Heterogeneous nuclear ribonucleoproteins A2/B1 from Rattus norvegicus (Rat).